We begin with the raw amino-acid sequence, 336 residues long: Solute-binding protein Csal_2479 (336 aa).

A signal peptide spans 1–33; that stretch reads MQTNKRLKMASCVKAAAMLGMLLSVSISTTAQA. Beta-D-glucuronate is bound by residues His42, Gln80, Arg156, Arg177, Tyr200, 217-218, and Glu244; that span reads NN.

It belongs to the bacterial solute-binding protein 7 family. As to quaternary structure, the complex is comprised of an extracytoplasmic solute-binding protein and a heteromeric permease formed by two transmembrane proteins.

It localises to the periplasm. Solute-binding protein that binds D-glucuronate (in vitro). Probably part of a tripartite ATP-independent periplasmic (TRAP) transport system that mediates solute transport into the cytoplasm. The sequence is that of Solute-binding protein Csal_2479 from Chromohalobacter salexigens (strain ATCC BAA-138 / DSM 3043 / CIP 106854 / NCIMB 13768 / 1H11).